Reading from the N-terminus, the 252-residue chain is 5'-nucleotidase SurE (252 aa).

The a divalent metal cation site is built by D8, D9, S40, and N93.

The protein belongs to the SurE nucleotidase family. It depends on a divalent metal cation as a cofactor.

Its subcellular location is the cytoplasm. It carries out the reaction a ribonucleoside 5'-phosphate + H2O = a ribonucleoside + phosphate. Nucleotidase that shows phosphatase activity on nucleoside 5'-monophosphates. The sequence is that of 5'-nucleotidase SurE from Erythrobacter litoralis (strain HTCC2594).